Consider the following 389-residue polypeptide: Pyruvate dehydrogenase E1 component subunit alpha-1, mitochondrial (389 aa).

A mitochondrion-targeting transit peptide spans 1–32; that stretch reads MALSRLSSRSNIITRPFSAAFSRLISTDTTPI. Pyruvate is bound by residues histidine 90, tyrosine 116, arginine 117, glycine 165, valine 167, aspartate 196, glycine 197, alanine 198, asparagine 225, and tyrosine 227. Tyrosine 116, arginine 117, glycine 165, valine 167, aspartate 196, glycine 197, alanine 198, and asparagine 225 together coordinate thiamine diphosphate. Aspartate 196 is a Mg(2+) binding site. Positions 225 and 227 each coordinate Mg(2+). Histidine 291 serves as a coordination point for thiamine diphosphate.

In terms of assembly, tetramer of 2 alpha and 2 beta subunits. It depends on thiamine diphosphate as a cofactor. Mg(2+) serves as cofactor. As to expression, expressed in roots, rosettes and flowers.

It is found in the mitochondrion matrix. It catalyses the reaction N(6)-[(R)-lipoyl]-L-lysyl-[protein] + pyruvate + H(+) = N(6)-[(R)-S(8)-acetyldihydrolipoyl]-L-lysyl-[protein] + CO2. Its activity is regulated as follows. E1 activity is regulated by phosphorylation (inactivation) and dephosphorylation (activation) of the alpha subunit. In terms of biological role, the pyruvate dehydrogenase complex catalyzes the overall conversion of pyruvate to acetyl-CoA and CO(2). It contains multiple copies of three enzymatic components: pyruvate dehydrogenase (E1), dihydrolipoamide acetyltransferase (E2) and lipoamide dehydrogenase (E3). The sequence is that of Pyruvate dehydrogenase E1 component subunit alpha-1, mitochondrial (E1 ALPHA) from Arabidopsis thaliana (Mouse-ear cress).